Here is a 944-residue protein sequence, read N- to C-terminus: Lactoferrin-binding protein A (944 aa).

A signal peptide spans 1 to 27; that stretch reads MNKKHGFSLTLTALAIAAAFPSYAANP. Residues 52–178 form the TBDR plug domain; it reads RRSKEATGLG…LGGAVAFRTK (127 aa). Residues 189–944 enclose the TBDR beta-barrel domain; it reads SWGIQAKTAY…NFSLALEMKF (756 aa). Residues 927–944 carry the TonB C-terminal box motif; it reads GRYAAPGRNFSLALEMKF.

The protein belongs to the TonB-dependent receptor family.

It is found in the cell outer membrane. Its function is as follows. Unknown. May be an iron-siderophore receptor. In Neisseria meningitidis serogroup A / serotype 4A (strain DSM 15465 / Z2491), this protein is Lactoferrin-binding protein A (lbpA).